Reading from the N-terminus, the 603-residue chain is Autophagy-related protein 22 (603 aa).

4 helical membrane-spanning segments follow: residues 46–66 (YGWA…PITL), 122–142 (TASF…VLII), 157–177 (FLLA…FLLP), and 181–201 (LLAA…FVLL). N-linked (GlcNAc...) asparagine glycosylation occurs at N254. 8 helical membrane-spanning segments follow: residues 274-294 (IGIG…LVVA), 304-324 (LVLF…ALWL), 342-362 (WAWV…IVRA), 368-388 (VLLF…VSGT), 401-421 (IAAL…GAFS), 439-459 (ACIC…LPFI), 464-484 (VIGL…GLVL), and 539-559 (AFGF…LVDV). N582 carries an N-linked (GlcNAc...) asparagine glycan.

It belongs to the ATG22 family.

The protein resides in the vacuole membrane. Its function is as follows. Vacuolar effluxer which mediate the efflux of amino acids resulting from autophagic degradation. The release of autophagic amino acids allows the maintenance of protein synthesis and viability during nitrogen starvation. The protein is Autophagy-related protein 22 (ATG22) of Coccidioides immitis (strain RS) (Valley fever fungus).